We begin with the raw amino-acid sequence, 297 residues long: MGTALDIKIKRANKVYHAGEVLSGVVVISSKDSVQHQGVSLTMEGTVNLQLSAKSVGVFEAFYNSVKPIQIINSTIEMVKPGKFPSGKTEIPFEFPLHLKGNKVLYETYHGVFVNIQYTLRCDMKRSLLAKDLTKTCEFIVHSAPQKGKFTPSPVDFTITPETLQNVKERALLPKFLLRGHLNSTNCVITQPLTGELVVESSEAAIRSVELQLVRVETCGCAEGYARDATEIQNIQIADGDVCRGLSVPIYMVFPRLFTCPTLETTNFKVEFEVNIVVLLHPDHLITENFPLKLCRI.

It belongs to the VPS26 family. As to quaternary structure, component of the commander complex that is essential for endosomal recycling of transmembrane cargos; the commander complex is composed of the CCC subcomplex and the retriever subcomplex. Component of the heterotrimeric retriever complex consisting of VPS26C, VPS29 and VPS35L; within the complex interacts with VPS35L. Interacts with SNX17 (via C-terminus); the interaction is direct and associates SNX17 with the retriever complex. Interacts with SNX31; the interaction is direct. In terms of tissue distribution, ubiquitously expressed.

It localises to the endosome. In terms of biological role, component of the commander complex that is essential for endosomal recycling of transmembrane cargos; the commander complex is composed of the CCC subcomplex and the retriever subcomplex. Component of the retriever complex, which is a heterotrimeric complex related to retromer cargo-selective complex (CSC) and essential for retromer-independent retrieval and recycling of numerous cargos such as integrin alpha-5/beta-1 (ITGA5:ITGB1). The recruitment of the retriever complex to the endosomal membrane involves CCC and WASH complexes. In the endosomes, drives the retriever and recycling of NxxY-motif-containing cargo proteins by coupling to SNX17, a cargo essential for the homeostatic maintenance of numerous cell surface proteins associated with processes that include cell migration, cell adhesion, nutrient supply and cell signaling. (Microbial infection) The heterotrimeric retriever complex, in collaboration with the CCC complex, mediates the exit of human papillomavirus to the cell surface. The chain is Vacuolar protein sorting-associated protein 26C from Homo sapiens (Human).